The following is a 78-amino-acid chain: Molt-inhibiting hormone (78 aa).

Intrachain disulfides connect C7/C44, C24/C40, and C27/C53.

It localises to the secreted. In terms of biological role, inhibits Y-organs where molting hormone (ecdysteroid) is secreted. A molting cycle is initiated when MIH secretion diminishes or stops. Also has significant hyperglycemic hormone (CHH) activity. The sequence is that of Molt-inhibiting hormone from Cancer pagurus (Rock crab).